The chain runs to 778 residues: General transcription and DNA repair factor IIH helicase subunit XPD/RAD3 (778 aa).

The 279-residue stretch at 7-285 folds into the Helicase ATP-binding domain; it reads DLPVLFPYPK…KVDSQKLQDE (279 aa). 42 to 49 contacts ATP; that stretch reads MPSGTGKT. [4Fe-4S] cluster-binding residues include cysteine 115, cysteine 133, cysteine 156, and cysteine 191. The DEAH box signature appears at 235–238; that stretch reads DEAH. Positions 750 to 765 are enriched in basic and acidic residues; that stretch reads SRKDQGGFIENENKEG. The tract at residues 750–778 is disordered; sequence SRKDQGGFIENENKEGEQDEDEDEDIEMQ. Residues 766–778 are compositionally biased toward acidic residues; sequence EQDEDEDEDIEMQ.

It belongs to the helicase family. RAD3/XPD subfamily. Component of the 7-subunit TFIIH core complex composed of XPB/SSL2, XPD/RAD3, SSL1, TFB1, TFB2, TFB4 and TFB5, which is active in NER. The core complex associates with the 3-subunit CTD-kinase module TFIIK composed of CCL1, KIN28 and TFB3 to form the 10-subunit holoenzyme (holo-TFIIH) active in transcription. An additionnal subunit, TFB6, plays a role in the dissociation of the SSL2 helicase from TFIIH after transcription initiation. It depends on [4Fe-4S] cluster as a cofactor. Requires Mg(2+) as cofactor.

The protein localises to the nucleus. The enzyme catalyses Couples ATP hydrolysis with the unwinding of duplex DNA at the replication fork by translocating in the 5'-3' direction. This creates two antiparallel DNA single strands (ssDNA). The leading ssDNA polymer is the template for DNA polymerase III holoenzyme which synthesizes a continuous strand.. It catalyses the reaction ATP + H2O = ADP + phosphate + H(+). In terms of biological role, ATP-dependent 5'-3' DNA helicase. Component of the general transcription and DNA repair factor IIH (TFIIH) core complex, which is involved in general and transcription-coupled nucleotide excision repair (NER) of damaged DNA and, when complexed to TFIIK, in RNA transcription by RNA polymerase II. In NER, TFIIH acts by opening DNA around the lesion to allow the excision of the damaged oligonucleotide and its replacement by a new DNA fragment. The ATP-dependent helicase activity of XPD/RAD3 is required for DNA opening. In transcription, TFIIH has an essential role in transcription initiation. When the pre-initiation complex (PIC) has been established, TFIIH is required for promoter opening and promoter escape. Phosphorylation of the C-terminal tail (CTD) of the largest subunit of RNA polymerase II by the kinase module TFIIK controls the initiation of transcription. XPD/RAD3 acts by forming a bridge between TFIIK and the core-TFIIH complex. Involved in the maintenance of the fidelity of DNA replication. Has single-stranded DNA-dependent ATPase activity. 5'-3' DNA helicase activity requires ATP (dATP partially substitutes), will unwind over 800 bp dsDNA. Able to unwind an RNA:DNA hybrid. In Saccharomyces cerevisiae (strain ATCC 204508 / S288c) (Baker's yeast), this protein is General transcription and DNA repair factor IIH helicase subunit XPD/RAD3.